We begin with the raw amino-acid sequence, 115 residues long: Waprin-like protein (115 aa).

The N-terminal stretch at 1–21 (MNRSLLAFAIVLVLLVAGTSS) is a signal peptide. The WAP domain occupies 23–69 (LFNKSGNCPMRNTVTSCTPRCIGDGECSSNQKCCPNKCGTTSCANSS). 4 disulfides stabilise this stretch: cysteine 30–cysteine 56, cysteine 39–cysteine 60, cysteine 43–cysteine 55, and cysteine 49–cysteine 65.

Belongs to the venom waprin family. Cys-rich waprin subfamily. As to expression, expressed by the venom gland.

It is found in the secreted. Its function is as follows. Antimicrobial peptides with activity against Gram-positive and Gram-negative bacteria as well as fungi. Recognizes carbohydrates in the microbial cell walls, and induces structural damage to them. Also inhibits microbial serine proteases, as well as mammalian elastases. Carbohydrates that are recognized are LPS, mannan, peptidoglycan, and N-acetl-D-glucosamine. This Tetramorium bicarinatum (Tramp ant) protein is Waprin-like protein.